A 174-amino-acid chain; its full sequence is Crossover junction endodeoxyribonuclease RuvC (174 aa).

Catalysis depends on residues D8, E69, and D141. The Mg(2+) site is built by D8, E69, and D141.

Belongs to the RuvC family. As to quaternary structure, homodimer which binds Holliday junction (HJ) DNA. The HJ becomes 2-fold symmetrical on binding to RuvC with unstacked arms; it has a different conformation from HJ DNA in complex with RuvA. In the full resolvosome a probable DNA-RuvA(4)-RuvB(12)-RuvC(2) complex forms which resolves the HJ. Requires Mg(2+) as cofactor.

The protein resides in the cytoplasm. It carries out the reaction Endonucleolytic cleavage at a junction such as a reciprocal single-stranded crossover between two homologous DNA duplexes (Holliday junction).. In terms of biological role, the RuvA-RuvB-RuvC complex processes Holliday junction (HJ) DNA during genetic recombination and DNA repair. Endonuclease that resolves HJ intermediates. Cleaves cruciform DNA by making single-stranded nicks across the HJ at symmetrical positions within the homologous arms, yielding a 5'-phosphate and a 3'-hydroxyl group; requires a central core of homology in the junction. The consensus cleavage sequence is 5'-(A/T)TT(C/G)-3'. Cleavage occurs on the 3'-side of the TT dinucleotide at the point of strand exchange. HJ branch migration catalyzed by RuvA-RuvB allows RuvC to scan DNA until it finds its consensus sequence, where it cleaves and resolves the cruciform DNA. The sequence is that of Crossover junction endodeoxyribonuclease RuvC from Xanthomonas euvesicatoria pv. vesicatoria (strain 85-10) (Xanthomonas campestris pv. vesicatoria).